A 278-amino-acid chain; its full sequence is NH(3)-dependent NAD(+) synthetase (278 aa).

39-46 contributes to the ATP binding site; that stretch reads GVSGGVDS. Asp45 contributes to the Mg(2+) binding site. Arg121 contributes to the deamido-NAD(+) binding site. Thr141 contacts ATP. Glu146 contacts Mg(2+). 2 residues coordinate deamido-NAD(+): Lys154 and Asp161. Residues Lys170 and Ser192 each contribute to the ATP site. 252–253 lines the deamido-NAD(+) pocket; it reads HK.

This sequence belongs to the NAD synthetase family. As to quaternary structure, homodimer.

The catalysed reaction is deamido-NAD(+) + NH4(+) + ATP = AMP + diphosphate + NAD(+) + H(+). It participates in cofactor biosynthesis; NAD(+) biosynthesis; NAD(+) from deamido-NAD(+) (ammonia route): step 1/1. In terms of biological role, catalyzes the ATP-dependent amidation of deamido-NAD to form NAD. Uses ammonia as a nitrogen source. This is NH(3)-dependent NAD(+) synthetase from Saccharolobus solfataricus (strain ATCC 35092 / DSM 1617 / JCM 11322 / P2) (Sulfolobus solfataricus).